The primary structure comprises 337 residues: Glyceraldehyde-3-phosphate dehydrogenase 3, cytosolic (337 aa).

A binding to NAD region spans residues 1 to 151 (MAKIKIGING…YKSDINIVSN (151 aa)). Residues 13–14 (RI), Asp35, and Arg82 contribute to the NAD(+) site. The catalytic stretch occupies residues 152–337 (ASCTTNCLAP…DLIRHMNSTK (186 aa)). Residues 153-155 (SCT), Thr184, 213-214 (TG), and Arg236 each bind D-glyceraldehyde 3-phosphate. Cys154 serves as the catalytic Nucleophile. NAD(+) is bound at residue Asn318.

Belongs to the glyceraldehyde-3-phosphate dehydrogenase family. Homotetramer.

The protein resides in the cytoplasm. The enzyme catalyses D-glyceraldehyde 3-phosphate + phosphate + NAD(+) = (2R)-3-phospho-glyceroyl phosphate + NADH + H(+). It functions in the pathway carbohydrate degradation; glycolysis; pyruvate from D-glyceraldehyde 3-phosphate: step 1/5. In terms of biological role, key enzyme in glycolysis that catalyzes the first step of the pathway by converting D-glyceraldehyde 3-phosphate (G3P) into 3-phospho-D-glyceroyl phosphate. Essential for the maintenance of cellular ATP levels and carbohydrate metabolism. In Zea mays (Maize), this protein is Glyceraldehyde-3-phosphate dehydrogenase 3, cytosolic (GAPC3).